We begin with the raw amino-acid sequence, 246 residues long: MPTAVSDAAAPAQARAWIEAAERVMVLTGAGVSAESGVPTFRDALTGLWARFNPEDLATEAAYREHPRMVWDWYQERRARVSQVQPNPAHLAIAALATRKTVALVTQNVDGLHQRAGSVGVIELHGNLFANKWLDGCGKCDVATAEPGRPPRCAACGAMLRPGVVWFGERLPVVANYRAEEAANTCDVCLVVGTSGMVYPAAGLPGLAKDHGARVIVVNPEPSVLDETADLVIHQPAGVCLPAMLA.

The region spanning 2 to 246 (PTAVSDAAAP…AGVCLPAMLA (245 aa)) is the Deacetylase sirtuin-type domain. 29–49 (GAGVSAESGVPTFRDALTGLW) is a binding site for NAD(+). Residues Y74 and R77 each contribute to the substrate site. 107–110 (QNVD) is an NAD(+) binding site. The active-site Proton acceptor is H125. Residues C137, C140, C153, and C156 each contribute to the Zn(2+) site. NAD(+) contacts are provided by residues 193–195 (GTS), 219–221 (NPE), and A237.

It belongs to the sirtuin family. Class III subfamily. The cofactor is Zn(2+).

The protein localises to the cytoplasm. The enzyme catalyses N(6)-acetyl-L-lysyl-[protein] + NAD(+) + H2O = 2''-O-acetyl-ADP-D-ribose + nicotinamide + L-lysyl-[protein]. It carries out the reaction N(6)-succinyl-L-lysyl-[protein] + NAD(+) + H2O = 2''-O-succinyl-ADP-D-ribose + nicotinamide + L-lysyl-[protein]. In terms of biological role, NAD-dependent lysine deacetylase and desuccinylase that specifically removes acetyl and succinyl groups on target proteins. Modulates the activities of several proteins which are inactive in their acylated form. This chain is NAD-dependent protein deacylase, found in Ralstonia nicotianae (strain ATCC BAA-1114 / GMI1000) (Ralstonia solanacearum).